The sequence spans 301 residues: Protoheme IX farnesyltransferase (301 aa).

9 helical membrane passes run 20 to 42, 55 to 75, 105 to 125, 126 to 146, 150 to 172, 176 to 198, 227 to 247, 249 to 269, and 280 to 300; these read FTELVKIGIVNSNTITAFTGMWL, VDVIFFTIVGSALIVAASGAF, ALMVALVLGVVGTIMLFMTTW, QAGVLGVIGVFLYVVVYSLYA, LVSNTVIGSFSGAVPPLIGWFAV, FSIVPIMLFLVMFCWQPPHFYAI, MFFWVILLTVLPFFMFDLGLV, VILATLLNIGWLALSIYGFKM, and FVYSLNYMTILFVAMVVISIF.

It belongs to the UbiA prenyltransferase family. Protoheme IX farnesyltransferase subfamily. In terms of assembly, interacts with CtaA.

The protein localises to the cell membrane. It carries out the reaction heme b + (2E,6E)-farnesyl diphosphate + H2O = Fe(II)-heme o + diphosphate. It functions in the pathway porphyrin-containing compound metabolism; heme O biosynthesis; heme O from protoheme: step 1/1. Its function is as follows. Converts heme B (protoheme IX) to heme O by substitution of the vinyl group on carbon 2 of heme B porphyrin ring with a hydroxyethyl farnesyl side group. The sequence is that of Protoheme IX farnesyltransferase from Listeria innocua serovar 6a (strain ATCC BAA-680 / CLIP 11262).